The following is a 368-amino-acid chain: DNA-directed RNA polymerase subunit alpha (368 aa).

The segment at 1-231 (MLWKGFQKPK…DHMNIFINFE (231 aa)) is alpha N-terminal domain (alpha-NTD). The tract at residues 243 to 368 (KPEIRNENLN…GFGGDNNPGF (126 aa)) is alpha C-terminal domain (alpha-CTD).

It belongs to the RNA polymerase alpha chain family. In terms of assembly, homodimer. The RNAP catalytic core consists of 2 alpha, 1 beta, 1 beta' and 1 omega subunit. When a sigma factor is associated with the core the holoenzyme is formed, which can initiate transcription.

It carries out the reaction RNA(n) + a ribonucleoside 5'-triphosphate = RNA(n+1) + diphosphate. DNA-dependent RNA polymerase catalyzes the transcription of DNA into RNA using the four ribonucleoside triphosphates as substrates. The polypeptide is DNA-directed RNA polymerase subunit alpha (Koribacter versatilis (strain Ellin345)).